A 371-amino-acid chain; its full sequence is uncharacterized protein (371 aa).

Belongs to the glycerate kinase type-1 family.

This is an uncharacterized protein from Synechocystis sp. (strain ATCC 27184 / PCC 6803 / Kazusa).